Reading from the N-terminus, the 456-residue chain is Bifunctional protein GlmU (456 aa).

Residues 1–228 (MPQNTLNIVI…SHLAAGVNNK (228 aa)) are pyrophosphorylase. Residues 11 to 14 (LAAG), Lys-25, Gln-75, 80 to 81 (GT), 102 to 104 (YGD), Gly-138, Glu-153, Asn-168, and Asn-226 each bind UDP-N-acetyl-alpha-D-glucosamine. Asp-104 contributes to the Mg(2+) binding site. Mg(2+) is bound at residue Asn-226. Residues 229–249 (LQLTELERIFQTEQAQELLKA) are linker. An N-acetyltransferase region spans residues 250–456 (GVTLRDPARF…GWVRPEKDKQ (207 aa)). UDP-N-acetyl-alpha-D-glucosamine is bound by residues Arg-332 and Lys-350. His-362 (proton acceptor) is an active-site residue. UDP-N-acetyl-alpha-D-glucosamine-binding residues include Tyr-365 and Asn-376. Acetyl-CoA contacts are provided by residues Ala-379, 385–386 (NY), Ser-404, Ala-422, and Arg-439.

It in the N-terminal section; belongs to the N-acetylglucosamine-1-phosphate uridyltransferase family. This sequence in the C-terminal section; belongs to the transferase hexapeptide repeat family. In terms of assembly, homotrimer. It depends on Mg(2+) as a cofactor.

It localises to the cytoplasm. It catalyses the reaction alpha-D-glucosamine 1-phosphate + acetyl-CoA = N-acetyl-alpha-D-glucosamine 1-phosphate + CoA + H(+). The catalysed reaction is N-acetyl-alpha-D-glucosamine 1-phosphate + UTP + H(+) = UDP-N-acetyl-alpha-D-glucosamine + diphosphate. It participates in nucleotide-sugar biosynthesis; UDP-N-acetyl-alpha-D-glucosamine biosynthesis; N-acetyl-alpha-D-glucosamine 1-phosphate from alpha-D-glucosamine 6-phosphate (route II): step 2/2. The protein operates within nucleotide-sugar biosynthesis; UDP-N-acetyl-alpha-D-glucosamine biosynthesis; UDP-N-acetyl-alpha-D-glucosamine from N-acetyl-alpha-D-glucosamine 1-phosphate: step 1/1. Its pathway is bacterial outer membrane biogenesis; LPS lipid A biosynthesis. In terms of biological role, catalyzes the last two sequential reactions in the de novo biosynthetic pathway for UDP-N-acetylglucosamine (UDP-GlcNAc). The C-terminal domain catalyzes the transfer of acetyl group from acetyl coenzyme A to glucosamine-1-phosphate (GlcN-1-P) to produce N-acetylglucosamine-1-phosphate (GlcNAc-1-P), which is converted into UDP-GlcNAc by the transfer of uridine 5-monophosphate (from uridine 5-triphosphate), a reaction catalyzed by the N-terminal domain. The chain is Bifunctional protein GlmU from Neisseria meningitidis serogroup B (strain ATCC BAA-335 / MC58).